We begin with the raw amino-acid sequence, 530 residues long: Glucose-6-phosphate 1-dehydrogenase (530 aa).

NADP(+) is bound by residues 53 to 60 (GASGDLAK), Arg87, Tyr162, and Lys186. Residues Lys186, 216–220 (HYLGK), Glu254, and Asp273 each bind D-glucose 6-phosphate. Residue His278 is the Proton acceptor of the active site. Residue Arg372 coordinates NADP(+). D-glucose 6-phosphate contacts are provided by Lys375 and Arg380. NADP(+) contacts are provided by Lys381, Arg385, and Arg408. Gln410 is a D-glucose 6-phosphate binding site. NADP(+) contacts are provided by residues 416–418 (YAK), 436–438 (DLT), Arg502, Tyr518, and Trp524.

This sequence belongs to the glucose-6-phosphate dehydrogenase family.

The protein resides in the cytoplasm. The protein localises to the cytosol. The enzyme catalyses D-glucose 6-phosphate + NADP(+) = 6-phospho-D-glucono-1,5-lactone + NADPH + H(+). The protein operates within carbohydrate degradation; pentose phosphate pathway; D-ribulose 5-phosphate from D-glucose 6-phosphate (oxidative stage): step 1/3. Its function is as follows. Cytosolic glucose-6-phosphate dehydrogenase that catalyzes the first and rate-limiting step of the oxidative branch within the pentose phosphate pathway/shunt, an alternative route to glycolysis for the dissimilation of carbohydrates and a major source of reducing power and metabolic intermediates for fatty acid and nucleic acid biosynthetic processes. The chain is Glucose-6-phosphate 1-dehydrogenase (g6pd) from Takifugu rubripes (Japanese pufferfish).